Here is a 306-residue protein sequence, read N- to C-terminus: Elongation factor Ts (306 aa).

Positions 80-83 (TDFV) are involved in Mg(2+) ion dislocation from EF-Tu.

Belongs to the EF-Ts family.

It localises to the cytoplasm. In terms of biological role, associates with the EF-Tu.GDP complex and induces the exchange of GDP to GTP. It remains bound to the aminoacyl-tRNA.EF-Tu.GTP complex up to the GTP hydrolysis stage on the ribosome. This chain is Elongation factor Ts, found in Clostridium kluyveri (strain NBRC 12016).